The sequence spans 147 residues: TRAP-T-associated universal stress protein TeaD (147 aa).

ATP contacts are provided by residues 8-10 (PVD), V38, 117-122 (GAQGTN), and 131-133 (SVA).

This sequence belongs to the universal stress protein A family. In terms of assembly, homodimer or homotetramer; in equilibrium. The dimer/tetramer ratio is ATP-dependent. ATP stabilizes dimer-dimer complexes, with one ATP molecule bound to each monomer.

It is found in the cytoplasm. In terms of biological role, ATP-binding protein that negatively regulates activity of the tripartite ATP-independent periplasmic (TRAP) ectoine transport system TeaABC. May regulate uptake according to the ATP status of the cell. The polypeptide is TRAP-T-associated universal stress protein TeaD (teaD) (Halomonas elongata (strain ATCC 33173 / DSM 2581 / NBRC 15536 / NCIMB 2198 / 1H9)).